Here is a 131-residue protein sequence, read N- to C-terminus: Protein Bouncer (131 aa).

Residues 1–26 (MGSLRTRQLFHAALLWLCLPLPLLLC) form the signal peptide. 4 disulfides stabilise this stretch: C31-C56, C50-C74, C80-C99, and C100-C105. In terms of domain architecture, UPAR/Ly6 spans 31–106 (CYYSPVLEKE…YSCCDWPYCN (76 aa)). N-linked (GlcNAc...) asparagine glycosylation is present at N65. N106 carries the GPI-anchor amidated asparagine lipid modification. A propeptide spans 107–131 (RAVALEPLTAMLVAAAVVACSFCLT) (removed in mature form).

This sequence belongs to the SPACA4/bouncer family. Interacts with spermatocyte complex composed of izumo1, spaca6 and tmem81. As to expression, expressed in oocytes. Not expressed in testis.

It is found in the cell membrane. In terms of biological role, oocyte-expressed fertilization factor that mediates sperm-egg binding and is essential for sperm entry into the egg. Necessary and sufficient to mediate species-specific gamete recognition and fertilization, which is essential for vertebrate species performing external fertilization. External fertilization cannot guarantee that only conspecific sperm reaches the egg by precopulatory mate choice: proteins such as Bouncer can therefore support the selection of conspecific sperm. The chain is Protein Bouncer from Oryzias latipes (Japanese rice fish).